Here is a 252-residue protein sequence, read N- to C-terminus: 14-3-3 protein 10 (252 aa).

The protein belongs to the 14-3-3 family. In terms of assembly, homodimer.

This Solanum lycopersicum (Tomato) protein is 14-3-3 protein 10 (TFT10).